The following is a 330-amino-acid chain: tRNA-modifying protein YgfZ (330 aa).

Folate contacts are provided by Trp-28 and Trp-190.

Belongs to the tRNA-modifying YgfZ family.

The protein localises to the cytoplasm. Its function is as follows. Folate-binding protein involved in regulating the level of ATP-DnaA and in the modification of some tRNAs. It is probably a key factor in regulatory networks that act via tRNA modification, such as initiation of chromosomal replication. The polypeptide is tRNA-modifying protein YgfZ (Yersinia pseudotuberculosis serotype IB (strain PB1/+)).